A 347-amino-acid polypeptide reads, in one-letter code: Protein RecA (347 aa).

67–74 contacts ATP; sequence GPESSGKT.

Belongs to the RecA family.

The protein resides in the cytoplasm. Can catalyze the hydrolysis of ATP in the presence of single-stranded DNA, the ATP-dependent uptake of single-stranded DNA by duplex DNA, and the ATP-dependent hybridization of homologous single-stranded DNAs. It interacts with LexA causing its activation and leading to its autocatalytic cleavage. The chain is Protein RecA from Helicobacter pylori (strain HPAG1).